Here is a 219-residue protein sequence, read N- to C-terminus: 7-cyano-7-deazaguanine synthase (219 aa).

Phe-10–Leu-20 contributes to the ATP binding site. Zn(2+) is bound by residues Cys-188, Cys-197, Cys-200, and Cys-203.

The protein belongs to the QueC family. In terms of assembly, homodimer. The cofactor is Zn(2+).

The catalysed reaction is 7-carboxy-7-deazaguanine + NH4(+) + ATP = 7-cyano-7-deazaguanine + ADP + phosphate + H2O + H(+). It functions in the pathway purine metabolism; 7-cyano-7-deazaguanine biosynthesis. Catalyzes the ATP-dependent conversion of 7-carboxy-7-deazaguanine (CDG) to 7-cyano-7-deazaguanine (preQ(0)). This is 7-cyano-7-deazaguanine synthase from Clostridium botulinum (strain Loch Maree / Type A3).